The chain runs to 273 residues: Urease accessory protein UreD (273 aa).

This sequence belongs to the UreD family. UreD, UreF and UreG form a complex that acts as a GTP-hydrolysis-dependent molecular chaperone, activating the urease apoprotein by helping to assemble the nickel containing metallocenter of UreC. The UreE protein probably delivers the nickel.

The protein localises to the cytoplasm. Its function is as follows. Required for maturation of urease via the functional incorporation of the urease nickel metallocenter. In Mycolicibacterium gilvum (strain PYR-GCK) (Mycobacterium gilvum (strain PYR-GCK)), this protein is Urease accessory protein UreD.